A 517-amino-acid polypeptide reads, in one-letter code: Pentatricopeptide repeat-containing protein At1g13040, mitochondrial (517 aa).

Residues 1–57 (MHQTLGAVRLAYRSRIANLVKSGMIDNAVQVFDEMRHSSYRVFSFDYNRFIGVLVRE) constitute a mitochondrion transit peptide. 14 PPR repeats span residues 8 to 42 (VRLA…SYRV), 43 to 77 (FSFD…GFSL), 78 to 112 (IPFT…GFIP), 113 to 147 (DIWA…GREP), 148 to 182 (DVVS…GVSP), 183 to 218 (DNKA…RVKL), 219 to 253 (STVV…GCEP), 254 to 288 (DLVT…GIQL), 289 to 320 (DAYS…MEPR), 324 to 358 (DVVS…GMVM), 359 to 393 (NVVT…GLSP), 394 to 428 (DRIF…EITP), 429 to 463 (DAIS…ECCP), and 464 to 498 (DELT…GFTL).

This sequence belongs to the PPR family. P subfamily.

The protein localises to the mitochondrion. The chain is Pentatricopeptide repeat-containing protein At1g13040, mitochondrial from Arabidopsis thaliana (Mouse-ear cress).